A 362-amino-acid polypeptide reads, in one-letter code: DNA replication and repair protein RecF (362 aa).

ATP is bound at residue 30–37 (GLNAQGKS).

Belongs to the RecF family.

The protein resides in the cytoplasm. Its function is as follows. The RecF protein is involved in DNA metabolism; it is required for DNA replication and normal SOS inducibility. RecF binds preferentially to single-stranded, linear DNA. It also seems to bind ATP. The protein is DNA replication and repair protein RecF of Thermoanaerobacter pseudethanolicus (strain ATCC 33223 / 39E) (Clostridium thermohydrosulfuricum).